The chain runs to 87 residues: MSRSAKKGAFVDAHLLKKVIDMNKQEKKRPIKTWSRRSTIFPEFVGNTFAVHNGKTFINVYVTDDMVGHKLGEFSPTRNFKQHTANR.

This sequence belongs to the universal ribosomal protein uS19 family.

Functionally, protein S19 forms a complex with S13 that binds strongly to the 16S ribosomal RNA. This Mycoplasma pneumoniae (strain ATCC 29342 / M129 / Subtype 1) (Mycoplasmoides pneumoniae) protein is Small ribosomal subunit protein uS19 (rpsS).